Consider the following 314-residue polypeptide: MSFASDMKNELTRIEVDEENAKAELSALIRMNGALSLSNQQFVINVQTENATTARRIYSLIKKVFNVEVELLVRKKMKLKKNNIYICRIKARAREILDDLGILKNGVFTHEIDETMIHDDEMRRSYLRGAFLAGGSVNNPETSSYHLEVFSLYEDHSEGITQLMNAYELNAKHLERKKGSIAYLKEAEKISDFLSLIGGYQALLKFEDVRIVRDMRNSVNRLVNCETANLNKTVSAAMKHVESIHLIDKEIGLDNLPDRLREIAKLRIEHQEVSLKELGEMMSTGKISKSGVNHRLRKLNEMADKLRSGEPIEL.

A DNA-binding region (H-T-H motif) is located at residues 274-308; sequence SLKELGEMMSTGKISKSGVNHRLRKLNEMADKLRS.

Belongs to the WhiA family.

Functionally, involved in cell division and chromosome segregation. The sequence is that of Probable cell division protein WhiA from Staphylococcus saprophyticus subsp. saprophyticus (strain ATCC 15305 / DSM 20229 / NCIMB 8711 / NCTC 7292 / S-41).